Consider the following 251-residue polypeptide: Probable transcriptional regulatory protein Caul_0780 (251 aa).

The protein belongs to the TACO1 family.

It localises to the cytoplasm. This is Probable transcriptional regulatory protein Caul_0780 from Caulobacter sp. (strain K31).